A 120-amino-acid chain; its full sequence is Guanidine hydrolase-activating protein A (120 aa).

Positions 2, 3, and 41 each coordinate Ni(2+). Zn(2+) contacts are provided by Cys-74, Cys-77, Cys-91, and Cys-94.

It belongs to the HypA/HybF family.

Functionally, involved in the maturation of the nickel-dependent guanidine hydrolase GdmH. Required for nickel insertion into the metal center of GdmH. Seems to be required only for GdmH activation and not for activity. The polypeptide is Guanidine hydrolase-activating protein A (Synechocystis sp. (strain ATCC 27184 / PCC 6803 / Kazusa)).